The primary structure comprises 245 residues: 1-(5-phosphoribosyl)-5-[(5-phosphoribosylamino)methylideneamino] imidazole-4-carboxamide isomerase (245 aa).

Residue D8 is the Proton acceptor of the active site. D131 acts as the Proton donor in catalysis.

It belongs to the HisA/HisF family.

The protein localises to the cytoplasm. The catalysed reaction is 1-(5-phospho-beta-D-ribosyl)-5-[(5-phospho-beta-D-ribosylamino)methylideneamino]imidazole-4-carboxamide = 5-[(5-phospho-1-deoxy-D-ribulos-1-ylimino)methylamino]-1-(5-phospho-beta-D-ribosyl)imidazole-4-carboxamide. Its pathway is amino-acid biosynthesis; L-histidine biosynthesis; L-histidine from 5-phospho-alpha-D-ribose 1-diphosphate: step 4/9. The polypeptide is 1-(5-phosphoribosyl)-5-[(5-phosphoribosylamino)methylideneamino] imidazole-4-carboxamide isomerase (Verminephrobacter eiseniae (strain EF01-2)).